Reading from the N-terminus, the 293-residue chain is Ribosomal RNA small subunit methyltransferase A (293 aa).

S-adenosyl-L-methionine contacts are provided by N33, V35, G60, E81, D111, and N130.

Belongs to the class I-like SAM-binding methyltransferase superfamily. rRNA adenine N(6)-methyltransferase family. RsmA subfamily.

Its subcellular location is the cytoplasm. It carries out the reaction adenosine(1518)/adenosine(1519) in 16S rRNA + 4 S-adenosyl-L-methionine = N(6)-dimethyladenosine(1518)/N(6)-dimethyladenosine(1519) in 16S rRNA + 4 S-adenosyl-L-homocysteine + 4 H(+). Its function is as follows. Specifically dimethylates two adjacent adenosines (A1518 and A1519) in the loop of a conserved hairpin near the 3'-end of 16S rRNA in the 30S particle. May play a critical role in biogenesis of 30S subunits. The polypeptide is Ribosomal RNA small subunit methyltransferase A (Corynebacterium glutamicum (strain R)).